Consider the following 367-residue polypeptide: D-alanine--D-alanine ligase (367 aa).

The 206-residue stretch at 141–346 (KNLFAQAGLR…YPELIERLIA (206 aa)) folds into the ATP-grasp domain. 174-229 (ERELGYPCFVKPANAGSSVGISKCKQRGDLKAAFIEAFQYDRKIIIEEAIVGREIE) is a binding site for ATP. Positions 300, 313, and 315 each coordinate Mg(2+).

This sequence belongs to the D-alanine--D-alanine ligase family. Requires Mg(2+) as cofactor. It depends on Mn(2+) as a cofactor.

It is found in the cytoplasm. It carries out the reaction 2 D-alanine + ATP = D-alanyl-D-alanine + ADP + phosphate + H(+). It participates in cell wall biogenesis; peptidoglycan biosynthesis. Functionally, cell wall formation. The sequence is that of D-alanine--D-alanine ligase from Geobacillus kaustophilus (strain HTA426).